Here is a 328-residue protein sequence, read N- to C-terminus: GTPase Obg 2 (328 aa).

Positions 1–139 constitute an Obg domain; that stretch reads MSFRREKFIE…HCVLLKLKIV (139 aa). An OBG-type G domain is found at 140-309; sequence SDVGIIGMPN…LHAQVKKAVV (170 aa). GTP contacts are provided by residues 146–153, 171–175, 192–195, 259–262, and 290–292; these read GMPNAGKS, FTTLE, DIPG, NKCD, and GDE. Mg(2+) is bound by residues S153 and T173.

The protein belongs to the TRAFAC class OBG-HflX-like GTPase superfamily. OBG GTPase family. Monomer. The cofactor is Mg(2+).

It is found in the cytoplasm. Functionally, an essential GTPase which binds GTP, GDP and possibly (p)ppGpp with moderate affinity, with high nucleotide exchange rates and a fairly low GTP hydrolysis rate. Plays a role in control of the cell cycle, stress response, ribosome biogenesis and in those bacteria that undergo differentiation, in morphogenesis control. The protein is GTPase Obg 2 of Anaplasma marginale (strain St. Maries).